The primary structure comprises 321 residues: MGEWTILERLLEAAVQQHSTMIGRILLTVVVIFRILIVAIVGETVYDDEQTMFVCNTLQPGCNQACYDRAFPISHIRYWVFQIIMVCTPSLCFITYSVHQSAKQRERRYSTVFLALDRDPPESIGGPGGTGGGGSGGGKREDKKLQNAIVNGVLQNTENTSKETEPDCLEVKELTPHPSGLRTASKSKLRRQEGISRFYIIQVVFRNALEIGFLVGQYFLYGFSVPGLYECNRYPCIKEVECYVSRPTEKTVFLVFMFAVSGICVVLNLAELNHLGWRKIKLAVRGAQAKRKSIYEIRNKDLPRVSVPNFGRTQSSDSAYV.

Residues 1 to 19 lie on the Cytoplasmic side of the membrane; it reads MGEWTILERLLEAAVQQHS. A helical transmembrane segment spans residues 20–42; sequence TMIGRILLTVVVIFRILIVAIVG. The Extracellular portion of the chain corresponds to 43-75; the sequence is ETVYDDEQTMFVCNTLQPGCNQACYDRAFPISH. The helical transmembrane segment at 76–98 threads the bilayer; sequence IRYWVFQIIMVCTPSLCFITYSV. The Cytoplasmic segment spans residues 99–197; that stretch reads HQSAKQRERR…KLRRQEGISR (99 aa). Residues 118 to 141 form a disordered region; that stretch reads RDPPESIGGPGGTGGGGSGGGKRE. Positions 125–137 are enriched in gly residues; that stretch reads GGPGGTGGGGSGG. A helical membrane pass occupies residues 198 to 220; that stretch reads FYIIQVVFRNALEIGFLVGQYFL. The Extracellular portion of the chain corresponds to 221–252; sequence YGFSVPGLYECNRYPCIKEVECYVSRPTEKTV. A helical transmembrane segment spans residues 253–275; the sequence is FLVFMFAVSGICVVLNLAELNHL. The Cytoplasmic segment spans residues 276 to 321; the sequence is GWRKIKLAVRGAQAKRKSIYEIRNKDLPRVSVPNFGRTQSSDSAYV.

The protein belongs to the connexin family. Delta-type subfamily. As to quaternary structure, a connexon is composed of a hexamer of connexins. In terms of tissue distribution, highly expressed in neurons.

Its subcellular location is the cell membrane. It localises to the cell junction. It is found in the gap junction. One gap junction consists of a cluster of closely packed pairs of transmembrane channels, the connexons, through which materials of low MW diffuse from one cell to a neighboring cell. This chain is Gap junction delta-2 protein (GJD2), found in Homo sapiens (Human).